A 134-amino-acid polypeptide reads, in one-letter code: Cytochrome b (134 aa).

3 consecutive transmembrane segments (helical) span residues 33–53, 77–98, and 113–133; these read FGSL…FLAM, WLIR…FLHV, and WNIG…GYVL. Residues His-83 and His-97 each coordinate heme b.

It belongs to the cytochrome b family. As to quaternary structure, the cytochrome bc1 complex contains 11 subunits: 3 respiratory subunits (MT-CYB, CYC1 and UQCRFS1), 2 core proteins (UQCRC1 and UQCRC2) and 6 low-molecular weight proteins (UQCRH/QCR6, UQCRB/QCR7, UQCRQ/QCR8, UQCR10/QCR9, UQCR11/QCR10 and a cleavage product of UQCRFS1). This cytochrome bc1 complex then forms a dimer. Heme b is required as a cofactor.

Its subcellular location is the mitochondrion inner membrane. In terms of biological role, component of the ubiquinol-cytochrome c reductase complex (complex III or cytochrome b-c1 complex) that is part of the mitochondrial respiratory chain. The b-c1 complex mediates electron transfer from ubiquinol to cytochrome c. Contributes to the generation of a proton gradient across the mitochondrial membrane that is then used for ATP synthesis. In Sorex shinto sadonis (Sado shrew), this protein is Cytochrome b (MT-CYB).